The sequence spans 179 residues: MAHEIVDGSSMQRALTRITYEIIEQNKGVDNLVFVGIKTRGVYLAQRLAKRMEQLEGVKVPVGSLDITLYRDDRHQPDHHVEPTVNATDVDVDINDKHVILVDDVLYTGRTVRAALDALMDLGRPKRISLAVLVDRGHRELPIRPDFVGKNIPTSNSETVHVAVEEYDGHEDISLENRK.

The PRPP-binding motif lies at Val-99 to Thr-111.

This sequence belongs to the purine/pyrimidine phosphoribosyltransferase family. PyrR subfamily. Homodimer and homohexamer; in equilibrium.

It carries out the reaction UMP + diphosphate = 5-phospho-alpha-D-ribose 1-diphosphate + uracil. Regulates transcriptional attenuation of the pyrimidine nucleotide (pyr) operon by binding in a uridine-dependent manner to specific sites on pyr mRNA. This disrupts an antiterminator hairpin in the RNA and favors formation of a downstream transcription terminator, leading to a reduced expression of downstream genes. Functionally, also displays a weak uracil phosphoribosyltransferase activity which is not physiologically significant. This Limosilactobacillus fermentum (strain NBRC 3956 / LMG 18251) (Lactobacillus fermentum) protein is Bifunctional protein PyrR.